Reading from the N-terminus, the 111-residue chain is Protein BEX5 (111 aa).

The segment covering 1–12 (MENVPKENKVVE) has biased composition (basic and acidic residues). The segment at 1-37 (MENVPKENKVVEKAPVQNEAPALGGGEYQEPGGNVKG) is disordered. The segment at 100–104 (HHDHH) is his cluster. Cysteine 108 provides a ligand contact to Zn(2+).

This sequence belongs to the BEX family. Ubiquitinated. Degraded by the proteasome.

Its subcellular location is the cytoplasm. The protein is Protein BEX5 (BEX5) of Homo sapiens (Human).